A 448-amino-acid polypeptide reads, in one-letter code: NADP-specific glutamate dehydrogenase (448 aa).

Substrate contacts are provided by K88, Q109, and K112. The active-site Proton donor is K124. Substrate is bound at residue G163. Positions 207 and 238 each coordinate NADP(+). S381 is a substrate binding site.

Belongs to the Glu/Leu/Phe/Val dehydrogenases family. Homohexamer.

The enzyme catalyses L-glutamate + NADP(+) + H2O = 2-oxoglutarate + NH4(+) + NADPH + H(+). Its function is as follows. Catalyzes the reversible oxidative deamination of glutamate to alpha-ketoglutarate and ammonia. The chain is NADP-specific glutamate dehydrogenase (gdhA) from Helicobacter pylori (strain ATCC 700392 / 26695) (Campylobacter pylori).